The following is a 418-amino-acid chain: Actin-related protein 3 (418 aa).

Position 1 is an N-acetylmethionine (methionine 1).

Belongs to the actin family. ARP3 subfamily. In terms of assembly, component of the Arp2/3 complex composed of arpB/Arp2, arpC/Arp3, arcA/p41-arc, arcB/p34-arc, arcC/p21-arc, arcD/p20-arc and arcE/p16-arc. Interacts with carmil (via the region between the LRR domain and COOH-terminal proline-rich domain); carmil is required for Arp2/3-dependent actin nucleation. Arp2/3 complex, MyoB, MyoC, and the alpha and beta subunits of capping protein all form a larger complex with carmil.

Its subcellular location is the cytoplasm. The protein resides in the cytoskeleton. It is found in the cytosol. It localises to the cell cortex. The protein localises to the cell projection. Its subcellular location is the pseudopodium. Functionally, functions as ATP-binding component of the Arp2/3 complex which is involved in regulation of actin polymerization and together with an activating nucleation-promoting factor (NPF) mediates the formation of branched actin networks. Seems to contact the pointed end of the daughter actin filament. The Arp2/3 complex is involved in organizing the actin system in cell motility and chemotaxis, in phagocytosis and macropinocytosis, at late steps of endosome processing, and in mitosis. In concert with a group of other proteins, the Arp2/3 complex plays a general role in the rapid activation and adaptation of the actin system to its multiple functions. The chain is Actin-related protein 3 (arpC) from Dictyostelium discoideum (Social amoeba).